The following is a 92-amino-acid chain: Small ribosomal subunit protein uS19 (92 aa).

It belongs to the universal ribosomal protein uS19 family.

Its function is as follows. Protein S19 forms a complex with S13 that binds strongly to the 16S ribosomal RNA. This Rickettsia akari (strain Hartford) protein is Small ribosomal subunit protein uS19.